The primary structure comprises 384 residues: 4-coumarate--CoA ligase (384 aa).

This sequence belongs to the ATP-dependent AMP-binding enzyme family.

The enzyme catalyses (E)-4-coumarate + ATP + CoA = (E)-4-coumaroyl-CoA + AMP + diphosphate. Converts p-coumaric acid into p-coumaryl CoA. This is necessary for the activation of the photoactive yellow protein (PYP) chromophore. This chain is 4-coumarate--CoA ligase (pcl), found in Rhodobacter capsulatus (strain ATCC BAA-309 / NBRC 16581 / SB1003).